The chain runs to 407 residues: Probable tRNA sulfurtransferase (407 aa).

In terms of domain architecture, THUMP spans 61–165; it reads NEIIQRLSKV…MDAIYIYEKV (105 aa). Residues 183–184, 208–209, R265, G287, and Q296 contribute to the ATP site; these read ML and HF.

The protein belongs to the ThiI family.

The protein resides in the cytoplasm. The catalysed reaction is [ThiI sulfur-carrier protein]-S-sulfanyl-L-cysteine + a uridine in tRNA + 2 reduced [2Fe-2S]-[ferredoxin] + ATP + H(+) = [ThiI sulfur-carrier protein]-L-cysteine + a 4-thiouridine in tRNA + 2 oxidized [2Fe-2S]-[ferredoxin] + AMP + diphosphate. The enzyme catalyses [ThiS sulfur-carrier protein]-C-terminal Gly-Gly-AMP + S-sulfanyl-L-cysteinyl-[cysteine desulfurase] + AH2 = [ThiS sulfur-carrier protein]-C-terminal-Gly-aminoethanethioate + L-cysteinyl-[cysteine desulfurase] + A + AMP + 2 H(+). Its pathway is cofactor biosynthesis; thiamine diphosphate biosynthesis. In terms of biological role, catalyzes the ATP-dependent transfer of a sulfur to tRNA to produce 4-thiouridine in position 8 of tRNAs, which functions as a near-UV photosensor. Also catalyzes the transfer of sulfur to the sulfur carrier protein ThiS, forming ThiS-thiocarboxylate. This is a step in the synthesis of thiazole, in the thiamine biosynthesis pathway. The sulfur is donated as persulfide by IscS. This Staphylococcus epidermidis (strain ATCC 35984 / DSM 28319 / BCRC 17069 / CCUG 31568 / BM 3577 / RP62A) protein is Probable tRNA sulfurtransferase.